A 1727-amino-acid chain; its full sequence is DNA-directed RNA polymerase II subunit rpb1 (1727 aa).

8 residues coordinate Zn(2+): Cys66, Cys69, Cys76, His79, Cys106, Cys109, Cys147, and Cys175. Mg(2+) is bound by residues Asp486, Asp488, and Asp490. A bridging helix region spans residues 819-831; that stretch reads PQEFFFHAMGGRE. Lys1266 is covalently cross-linked (Glycyl lysine isopeptide (Lys-Gly) (interchain with G-Cter in ubiquitin)). Disordered regions lie at residues 1478-1512 and 1551-1727; these read EPSNVSYPDTPGSQTPSYSYGDGSTTPFHNPYDAP and PTYS…NKKK. A compositionally biased stretch (polar residues) spans 1480-1505; sequence SNVSYPDTPGSQTPSYSYGDGSTTPF. 23 consecutive repeat copies span residues 1553 to 1559, 1560 to 1566, 1567 to 1573, 1574 to 1580, 1581 to 1587, 1588 to 1594, 1595 to 1601, 1602 to 1608, 1609 to 1615, 1616 to 1622, 1623 to 1629, 1630 to 1636, 1637 to 1643, 1644 to 1650, 1651 to 1657, 1658 to 1664, 1665 to 1671, 1672 to 1678, 1679 to 1685, 1686 to 1692, 1693 to 1699, 1700 to 1706, and 1707 to 1713. Residues 1553 to 1713 form a C-terminal domain (CTD); 23 X 7 AA tandem repeats of Y-S-P-[ST]-S-P-[FST] region; the sequence is YSPTSPSYSP…SPSYSPSSPT (161 aa).

The protein belongs to the RNA polymerase beta' chain family. In terms of assembly, component of the RNA polymerase II (Pol II) complex consisting of 12 subunits. In terms of processing, the tandem heptapeptide repeats in the C-terminal domain (CTD) can be highly phosphorylated. The phosphorylation activates Pol II. Phosphorylation occurs mainly at residues 'Ser-2' and 'Ser-5' of the heptapeptide repeat. The phosphorylation state is believed to result from the balanced action of site-specific CTD kinases and phosphatase, and a 'CTD code' that specifies the position of Pol II within the transcription cycle has been proposed. Following transcription stress, the elongating form of RNA polymerase II (RNA pol IIo) is polyubiquitinated via 'Lys-63'-linkages on Lys-1266 at DNA damage sites without leading to degradation: ubiquitination promotes RNA pol IIo backtracking to allow access by the transcription-coupled nucleotide excision repair (TC-NER) machinery. Subsequent DEF1-dependent polyubiquitination by the elongin complex via 'Lys-48'-linkages may lead to proteasome-mediated degradation; presumably at stalled RNA pol II where TC-NER has failed, to halt global transcription and enable 'last resort' DNA repair pathways.

The protein localises to the nucleus. The catalysed reaction is RNA(n) + a ribonucleoside 5'-triphosphate = RNA(n+1) + diphosphate. In terms of biological role, DNA-dependent RNA polymerase catalyzes the transcription of DNA into RNA using the four ribonucleoside triphosphates as substrates. Largest and catalytic component of RNA polymerase II which synthesizes mRNA precursors and many functional non-coding RNAs. Forms the polymerase active center together with the second largest subunit. Pol II is the central component of the basal RNA polymerase II transcription machinery. It is composed of mobile elements that move relative to each other. RPB1 is part of the core element with the central large cleft, the clamp element that moves to open and close the cleft and the jaws that are thought to grab the incoming DNA template. At the start of transcription, a single-stranded DNA template strand of the promoter is positioned within the central active site cleft of Pol II. A bridging helix emanates from RPB1 and crosses the cleft near the catalytic site and is thought to promote translocation of Pol II by acting as a ratchet that moves the RNA-DNA hybrid through the active site by switching from straight to bent conformations at each step of nucleotide addition. During transcription elongation, Pol II moves on the template as the transcript elongates. Elongation is influenced by the phosphorylation status of the C-terminal domain (CTD) of Pol II largest subunit (RPB1), which serves as a platform for assembly of factors that regulate transcription initiation, elongation, termination and mRNA processing. In Dictyostelium discoideum (Social amoeba), this protein is DNA-directed RNA polymerase II subunit rpb1 (polr2a).